We begin with the raw amino-acid sequence, 359 residues long: Peptide chain release factor 1 (359 aa).

At Gln236 the chain carries N5-methylglutamine.

It belongs to the prokaryotic/mitochondrial release factor family. Methylated by PrmC. Methylation increases the termination efficiency of RF1.

The protein resides in the cytoplasm. Functionally, peptide chain release factor 1 directs the termination of translation in response to the peptide chain termination codons UAG and UAA. This chain is Peptide chain release factor 1, found in Streptococcus pneumoniae serotype 4 (strain ATCC BAA-334 / TIGR4).